We begin with the raw amino-acid sequence, 535 residues long: Beta-hexosaminidase 3 (535 aa).

The N-terminal stretch at 1–24 (MRGSGAKIAGVLPLFMLFIAGTIS) is a signal peptide. The N-linked (GlcNAc...) asparagine glycan is linked to N92. Residues C292 and C334 are joined by a disulfide bond. The active-site Proton donor is E329. Residues N331, N405, N441, and N496 are each glycosylated (N-linked (GlcNAc...) asparagine). The cysteines at positions 506 and 532 are disulfide-linked.

It belongs to the glycosyl hydrolase 20 family. N-glycosylated. Expressed in roots, leaves, stems, flowers and siliques.

It is found in the cell membrane. It catalyses the reaction Hydrolysis of terminal non-reducing N-acetyl-D-hexosamine residues in N-acetyl-beta-D-hexosaminides.. Slightly inhibited by N-acetylcastanospermine. Its function is as follows. Has a broad substrate specificity. Can use synthetic substrates such as pyridylaminated chitotriose, p-nitrophenyl-beta-N-acetylglucosaminide, p-nitrophenyl-2-acetamido-2-deoxy-beta-D-glucopyranoside (pNP-GlcNAc), p-nitrophenyl-2-acetamido-2-deoxy-beta-D-galactopyranoside (pNP-GalNAc), 4-methylumbelliferyl-2-acetamido-2-deoxy-beta-D-glucopyranoside (MU-GlcNAc), and 4-methylumbelliferyl-6-sulfo-2-acetamido-2-deoxy-beta-D-glucopyranoside (MU-GlcNAc-6SO(4)) as substrates. Removes terminal GlcNAc residues from alpha1,3- and alpha1,6-mannosyl branches of biantennary N-glycans without any strict branch preference. Required for the presence of paucimannosidic N-glycans in glycoproteins of roots and leaves. This Arabidopsis thaliana (Mouse-ear cress) protein is Beta-hexosaminidase 3 (HEXO3).